The primary structure comprises 132 residues: Transthyretin-like protein 16 (132 aa).

Positions 1–19 (MRSLVVCLLLAACALECTA) are cleaved as a signal peptide. An N-linked (GlcNAc...) asparagine glycan is attached at N23.

This sequence belongs to the nematode transthyretin-like family.

Its subcellular location is the secreted. This is Transthyretin-like protein 16 (ttr-16) from Caenorhabditis elegans.